Reading from the N-terminus, the 83-residue chain is uncharacterized protein (83 aa).

This is an uncharacterized protein from Bacillus anthracis.